A 440-amino-acid polypeptide reads, in one-letter code: MEGHSNTSVILHTYQQQQPQQLISSIIPQTLSDGYGISAPISQADCSGNSNFVNTNPWNNTTFQAYQTDAQFTNEISVLNYPNVYDDFSKESSNGILSDPSLHGSNSSSSTSDVGSSVDCSISPEPILMPSVKRGRPTENPCWAYFHRIDDQLVKCRLCTKVVRSACATNMTKHLERHHADDYQKVTGQLKLFRMNDVGIRSKMHYEVADNPLSTLPVVTNSYILPKMEPMDTFDPSQYYGMQQDPTLNQQQFIQFEQPQASIDPQTWPLTHFWQNTAQTNIMSHLGEASTSTLGSSVIQEAHKMNPDSNDKSFQLDLEQQNCVIIEQKLDDKPRVTKPTTKPYQKRNRKTEHPVWAFFKRTGDGNAECIICQGVVKSPCSSNFMRHLMRHHSTEYNDVYLKWIEKRNITHPGIHCTSVPPPAFINNETSRTEQTTFSVK.

Residues 96 to 119 (ILSDPSLHGSNSSSSTSDVGSSVD) form a disordered region. Residues 98 to 119 (SDPSLHGSNSSSSTSDVGSSVD) show a composition bias toward low complexity. 2 consecutive BED-type zinc fingers follow at residues 137–186 (PTEN…YQKV) and 350–399 (KTEH…YNDV). 8 residues coordinate Zn(2+): cysteine 156, cysteine 159, histidine 174, histidine 179, cysteine 369, cysteine 372, histidine 387, and histidine 392.

Functionally, may be directly or indirectly involved in cuticle function. The sequence is that of Protein dumpy-20 (dpy-20) from Caenorhabditis elegans.